A 620-amino-acid polypeptide reads, in one-letter code: UvrABC system protein C (620 aa).

A GIY-YIG domain is found at 13–92 (DKPGVYIMKN…IKKYSPRYNI (80 aa)). One can recognise a UVR domain in the interval 204–239 (TSIIKNLKLEMEKAAEELEFEKAAKIRDRILAIELI).

The protein belongs to the UvrC family. In terms of assembly, interacts with UvrB in an incision complex.

Its subcellular location is the cytoplasm. In terms of biological role, the UvrABC repair system catalyzes the recognition and processing of DNA lesions. UvrC both incises the 5' and 3' sides of the lesion. The N-terminal half is responsible for the 3' incision and the C-terminal half is responsible for the 5' incision. This is UvrABC system protein C from Clostridium perfringens (strain SM101 / Type A).